The following is a 254-amino-acid chain: MGRVIRNQRKGAGSIFTSHTRLRQGAAKLRTLDYAERHGYIRGVVKQIVHDAGRGAPLAKVVFRDPYKYKLREETFIANEGVHTGQFIYAGKNASLNVGNILPLGSVPEGTIVSNVEERPGDRGALARTSGNYVIVIGHNPDENKTRIRLPSGAKKIVSSDARGVIGVIAGGGRVDKPLLKAGRAFHKYKVKRNSWPKTRGVAMNPVDHPHGGGNHQHIGKASTISRGAVSGQKAGLIAARRTGLLRGSQKTQD.

This sequence belongs to the universal ribosomal protein uL2 family.

The polypeptide is Large ribosomal subunit protein uL2 (RPL2) (Eremothecium gossypii (strain ATCC 10895 / CBS 109.51 / FGSC 9923 / NRRL Y-1056) (Yeast)).